The chain runs to 101 residues: Urease subunit beta (101 aa).

Belongs to the urease beta subunit family. Heterotrimer of UreA (gamma), UreB (beta) and UreC (alpha) subunits. Three heterotrimers associate to form the active enzyme.

The protein localises to the cytoplasm. It carries out the reaction urea + 2 H2O + H(+) = hydrogencarbonate + 2 NH4(+). It functions in the pathway nitrogen metabolism; urea degradation; CO(2) and NH(3) from urea (urease route): step 1/1. The chain is Urease subunit beta from Roseobacter denitrificans (strain ATCC 33942 / OCh 114) (Erythrobacter sp. (strain OCh 114)).